We begin with the raw amino-acid sequence, 664 residues long: Fructose-1,6-bisphosphatase class 3 (664 aa).

Belongs to the FBPase class 3 family. It depends on Mn(2+) as a cofactor.

It carries out the reaction beta-D-fructose 1,6-bisphosphate + H2O = beta-D-fructose 6-phosphate + phosphate. Its pathway is carbohydrate biosynthesis; gluconeogenesis. The protein is Fructose-1,6-bisphosphatase class 3 of Bacteroides fragilis (strain YCH46).